The following is a 478-amino-acid chain: Glutamyl-tRNA(Gln) amidotransferase subunit A (478 aa).

Residues K72 and S147 each act as charge relay system in the active site. The active-site Acyl-ester intermediate is S171.

Belongs to the amidase family. GatA subfamily. As to quaternary structure, heterotrimer of A, B and C subunits.

The catalysed reaction is L-glutamyl-tRNA(Gln) + L-glutamine + ATP + H2O = L-glutaminyl-tRNA(Gln) + L-glutamate + ADP + phosphate + H(+). Its function is as follows. Allows the formation of correctly charged Gln-tRNA(Gln) through the transamidation of misacylated Glu-tRNA(Gln) in organisms which lack glutaminyl-tRNA synthetase. The reaction takes place in the presence of glutamine and ATP through an activated gamma-phospho-Glu-tRNA(Gln). This chain is Glutamyl-tRNA(Gln) amidotransferase subunit A, found in Saccharolobus solfataricus (strain ATCC 35092 / DSM 1617 / JCM 11322 / P2) (Sulfolobus solfataricus).